We begin with the raw amino-acid sequence, 122 residues long: MPTIKQLIRNTRQPIKNVTKSPALRGCPQRRGTCTRVTITPKKPNSALRKVARVRLTSGFEITAYIPGIGHNSQEHSVVLVRGGRVKDLPGVRYHIVRGTLDAVGVKDRQQGRSKYGVKKPK.

This sequence belongs to the universal ribosomal protein uS12 family. Part of the 30S ribosomal subunit.

It localises to the plastid. The protein resides in the chloroplast. With S4 and S5 plays an important role in translational accuracy. Located at the interface of the 30S and 50S subunits. This chain is Small ribosomal subunit protein uS12c (rps12), found in Illicium oligandrum (Star anise).